The primary structure comprises 245 residues: Probable transcriptional regulatory protein pc1328 (245 aa).

Belongs to the TACO1 family.

The protein localises to the cytoplasm. The chain is Probable transcriptional regulatory protein pc1328 from Protochlamydia amoebophila (strain UWE25).